The primary structure comprises 136 residues: Evasin P991 (136 aa).

The first 28 residues, Met-1–Ala-28, serve as a signal peptide directing secretion. N-linked (GlcNAc...) asparagine glycans are attached at residues Asn-41, Asn-61, Asn-64, Asn-78, Asn-92, Asn-100, and Asn-122. Disulfide bonds link Cys-55/Cys-77, Cys-73/Cys-114, Cys-90/Cys-119, and Cys-109/Cys-128.

The protein resides in the secreted. Functionally, salivary chemokine-binding protein which has chemokine-neutralizing activity and binds to host chemokines CCL2, CCL3, CCL3L1, CCL4, CCL4L1, CCL5, CCL6, CCL7, CCL8, CCL9, CCL11, CCL12, CCL13, CCL14, CCL16, CCL17, CCL18, CCL19, CCL22, CCL23, CCL24 and CCL27. This chain is Evasin P991, found in Amblyomma cajennense (Cayenne tick).